The chain runs to 86 residues: U2-sicaritoxin-Li1a (86 aa).

A signal peptide spans 1-20; the sequence is MTFKLFVVVTLVLAIYVATA. The propeptide occupies 21–33; the sequence is EEAMKDDSEPAER. Cystine bridges form between Cys-35/Cys-53, Cys-42/Cys-62, Cys-52/Cys-71, and Cys-64/Cys-69.

The protein belongs to the neurotoxin 39 family. Expressed by the venom gland.

The protein localises to the secreted. Its function is as follows. Toxin active against S.frugiperda larvae. May act on sodium channels (Nav). The sequence is that of U2-sicaritoxin-Li1a from Loxosceles intermedia (Brown spider).